We begin with the raw amino-acid sequence, 1342 residues long: DNA-directed RNA polymerase subunit beta (1342 aa).

The protein belongs to the RNA polymerase beta chain family. In terms of assembly, the RNAP catalytic core consists of 2 alpha, 1 beta, 1 beta' and 1 omega subunit. When a sigma factor is associated with the core the holoenzyme is formed, which can initiate transcription.

The catalysed reaction is RNA(n) + a ribonucleoside 5'-triphosphate = RNA(n+1) + diphosphate. Functionally, DNA-dependent RNA polymerase catalyzes the transcription of DNA into RNA using the four ribonucleoside triphosphates as substrates. This is DNA-directed RNA polymerase subunit beta from Tolumonas auensis (strain DSM 9187 / NBRC 110442 / TA 4).